The following is a 172-amino-acid chain: 3-hydroxydecanoyl-[acyl-carrier-protein] dehydratase (172 aa).

His-71 is a catalytic residue.

It belongs to the thioester dehydratase family. FabA subfamily. As to quaternary structure, homodimer.

It is found in the cytoplasm. It catalyses the reaction a (3R)-hydroxyacyl-[ACP] = a (2E)-enoyl-[ACP] + H2O. The enzyme catalyses (3R)-hydroxydecanoyl-[ACP] = (2E)-decenoyl-[ACP] + H2O. It carries out the reaction (2E)-decenoyl-[ACP] = (3Z)-decenoyl-[ACP]. It participates in lipid metabolism; fatty acid biosynthesis. Its function is as follows. Necessary for the introduction of cis unsaturation into fatty acids. Catalyzes the dehydration of (3R)-3-hydroxydecanoyl-ACP to E-(2)-decenoyl-ACP and then its isomerization to Z-(3)-decenoyl-ACP. Can catalyze the dehydratase reaction for beta-hydroxyacyl-ACPs with saturated chain lengths up to 16:0, being most active on intermediate chain length. The protein is 3-hydroxydecanoyl-[acyl-carrier-protein] dehydratase of Erwinia tasmaniensis (strain DSM 17950 / CFBP 7177 / CIP 109463 / NCPPB 4357 / Et1/99).